Reading from the N-terminus, the 392-residue chain is Protein FAM53C (392 aa).

Met1 carries the N-acetylmethionine modification. The interval Leu76 to Ser120 is disordered. Over residues Ser85–Ser97 the composition is skewed to low complexity. Phosphoserine occurs at positions 122 and 162. 2 disordered regions span residues Leu141–Val167 and Asp201–Arg294. A compositionally biased stretch (polar residues) spans Asp201–Trp215. 4 positions are modified to phosphoserine: Ser232, Ser234, Ser255, and Ser273. Positions Ala241–Pro256 are enriched in low complexity. Over residues Leu278–Arg294 the composition is skewed to basic and acidic residues. At Ser299 the chain carries Phosphoserine.

The protein belongs to the FAM53 family.

The protein is Protein FAM53C of Bos taurus (Bovine).